Reading from the N-terminus, the 307-residue chain is MISAKMVKDLREKTGAGMMDCKKALTECDGDLEKAVEVLREKGLAAAAKKSGRVAAEGIVSTYISEDMKNGSIIEFNCETDFVSVNELFVELANNLSKQAAFSNVSTAEELLEEKYIADESKLVKDVITELIAKLGENMNLRRIAKLSVDKGVITSYIHGGGRIGVIVKLACEKEDAKLAEIAKDVAMQVAATNPLFLNRDGVDTDTLEKEKEIYRVQALNEGKPEKVVEKMVMGRINKYYKENCLVEQLWVKNGDYTITKYLQEQSKEIGADITVEAFVRYEKGEGIEKKEEDFAEEVQRQMNQGK.

The segment at threonine 80 to valine 83 is involved in Mg(2+) ion dislocation from EF-Tu.

Belongs to the EF-Ts family.

Its subcellular location is the cytoplasm. In terms of biological role, associates with the EF-Tu.GDP complex and induces the exchange of GDP to GTP. It remains bound to the aminoacyl-tRNA.EF-Tu.GTP complex up to the GTP hydrolysis stage on the ribosome. This Clostridium botulinum (strain 657 / Type Ba4) protein is Elongation factor Ts.